The following is a 296-amino-acid chain: Putative thiosulfate sulfurtransferase SseA (296 aa).

Rhodanese domains lie at 31–138 (GKPG…DTSL) and 168–286 (ILGT…VPIT). Cys-245 serves as the catalytic Cysteine persulfide intermediate. Arg-250 contributes to the substrate binding site.

The catalysed reaction is thiosulfate + hydrogen cyanide = thiocyanate + sulfite + 2 H(+). In Mycobacterium leprae (strain TN), this protein is Putative thiosulfate sulfurtransferase SseA (sseA).